Reading from the N-terminus, the 277-residue chain is 3-methyl-2-oxobutanoate hydroxymethyltransferase (277 aa).

Residues aspartate 43 and aspartate 82 each coordinate Mg(2+). Residues 43–44 (DS), aspartate 82, and lysine 112 contribute to the 3-methyl-2-oxobutanoate site. Glutamate 114 provides a ligand contact to Mg(2+). Glutamate 181 functions as the Proton acceptor in the catalytic mechanism.

This sequence belongs to the PanB family. Homodecamer; pentamer of dimers. Mg(2+) serves as cofactor.

It is found in the cytoplasm. The catalysed reaction is 3-methyl-2-oxobutanoate + (6R)-5,10-methylene-5,6,7,8-tetrahydrofolate + H2O = 2-dehydropantoate + (6S)-5,6,7,8-tetrahydrofolate. Its pathway is cofactor biosynthesis; (R)-pantothenate biosynthesis; (R)-pantoate from 3-methyl-2-oxobutanoate: step 1/2. In terms of biological role, catalyzes the reversible reaction in which hydroxymethyl group from 5,10-methylenetetrahydrofolate is transferred onto alpha-ketoisovalerate to form ketopantoate. The chain is 3-methyl-2-oxobutanoate hydroxymethyltransferase from Listeria monocytogenes serotype 4b (strain CLIP80459).